We begin with the raw amino-acid sequence, 123 residues long: Venom protein 29 (123 aa).

An N-terminal signal peptide occupies residues 1–18; that stretch reads MNKLFLFTLLVTLWSVKG.

In terms of processing, contains 3 disulfide bonds. As to expression, expressed by the venom gland.

The protein localises to the secreted. This is Venom protein 29 from Lychas mucronatus (Chinese swimming scorpion).